The primary structure comprises 542 residues: MKANNRNRTSVAIVGAGPNGAAMANLLGLYGVDTIVVERAPQIVEFPRAVGIDDEALRLFQTAGLADELSRDIIQNVPLRMFKANGECFADIRPSIREFGWWRRNIFMQHLAERTLRDALARYPHVSLRTGEEVVGLEQDDECVTLQVRAADGQQYELDADYVVAADGGRSPVREMLGIRLAGTTHPMKWVVVDVKNARLDQPCTALNCDPRRPNVCIYLPFNYRRWEFLVFPHEDEEAIAQPESIRALIAPYVDDVDRIEIVRARTYTHHSRVAERFVAGRVALIGDAAHLSPPWIGQGLNAGLRDVGNLAWKLAGVVNGTLHRRVISTYESERRDHAKAMIDLADTFGAMLMPTSRLVAFLRDRFLGLARYAPGLKDYVLQMRFKPMPSYTHGVVVTGTSDAVGRMIVQPDVETADGARRKLDDVLGPWFAIIGWRCDPQACLSDDDRAFWTALGAKFVQIVRSRSGTCREQRIASAHDSVCVEDVDNAMAEWFDRHAAPLVVVRPDRYVAAQTDAAGMAGVTAAFQAFAARQRETADVC.

FAD is bound by residues 10–39 (SVAIVGAGPNGAAMANLLGLYGVDTIVVER) and 278–288 (FVAGRVALIGD).

This sequence belongs to the PheA/TfdB FAD monooxygenase family. FAD serves as cofactor.

The catalysed reaction is 3-(3-hydroxyphenyl)propanoate + NADH + O2 + H(+) = 3-(2,3-dihydroxyphenyl)propanoate + NAD(+) + H2O. It carries out the reaction (2E)-3-(3-hydroxyphenyl)prop-2-enoate + NADH + O2 + H(+) = (2E)-3-(2,3-dihydroxyphenyl)prop-2-enoate + NAD(+) + H2O. It participates in aromatic compound metabolism; 3-phenylpropanoate degradation. Its function is as follows. Catalyzes the insertion of one atom of molecular oxygen into position 2 of the phenyl ring of 3-(3-hydroxyphenyl)propionate (3-HPP) and hydroxycinnamic acid (3HCI). The chain is 3-(3-hydroxy-phenyl)propionate/3-hydroxycinnamic acid hydroxylase from Burkholderia cenocepacia (strain HI2424).